The following is a 137-amino-acid chain: Cofilin (137 aa).

Positions 5 to 135 constitute an ADF-H domain; sequence GVKVSPECLE…AYETVLEKVT (131 aa).

Belongs to the actin-binding proteins ADF family.

Its subcellular location is the cytoplasm. It is found in the cytoskeleton. The protein localises to the nucleus matrix. Its function is as follows. Controls reversibly actin polymerization and depolymerization in a pH-sensitive manner. It has the ability to bind G- and F-actin in a 1:1 ratio of cofilin to actin. Binding to F-actin is regulated by tropomyosin. It is the major component of intranuclear and cytoplasmic actin rods. Required for accumulation of actin at the cell division site via depolymerizing actin at the cell ends. In association with myosin II has a role in the assembly of the contractile ring via severing actin filaments. Involved in the maintenance of the contractile ring once formed. In association with profilin and capping protein, has a role in the mitotic reorganization of the actin cytoskeleton. Severs actin filaments (F-actin). This is Cofilin (cof1) from Schizosaccharomyces pombe (strain 972 / ATCC 24843) (Fission yeast).